A 141-amino-acid chain; its full sequence is Large ribosomal subunit protein uL11 (141 aa).

The protein belongs to the universal ribosomal protein uL11 family. Part of the ribosomal stalk of the 50S ribosomal subunit. Interacts with L10 and the large rRNA to form the base of the stalk. L10 forms an elongated spine to which L12 dimers bind in a sequential fashion forming a multimeric L10(L12)X complex. In terms of processing, one or more lysine residues are methylated.

In terms of biological role, forms part of the ribosomal stalk which helps the ribosome interact with GTP-bound translation factors. The chain is Large ribosomal subunit protein uL11 from Nitratiruptor sp. (strain SB155-2).